A 544-amino-acid chain; its full sequence is Membrane protein insertase YidC (544 aa).

The next 5 helical transmembrane spans lie at 13–33, 343–363, 409–429, 461–481, and 506–526; these read LSLF…SNIL, WGLS…PLTF, LGGC…YSLV, LYFV…FTQL, and MPIM…IYWI.

It belongs to the OXA1/ALB3/YidC family. Type 1 subfamily. In terms of assembly, interacts with the Sec translocase complex via SecD. Specifically interacts with transmembrane segments of nascent integral membrane proteins during membrane integration.

Its subcellular location is the cell inner membrane. Functionally, required for the insertion and/or proper folding and/or complex formation of integral membrane proteins into the membrane. Involved in integration of membrane proteins that insert both dependently and independently of the Sec translocase complex, as well as at least some lipoproteins. Aids folding of multispanning membrane proteins. This chain is Membrane protein insertase YidC, found in Borreliella burgdorferi (strain ATCC 35210 / DSM 4680 / CIP 102532 / B31) (Borrelia burgdorferi).